Here is a 337-residue protein sequence, read N- to C-terminus: Putative [LysW]-lysine/[LysW]-ornithine hydrolase (337 aa).

His-67 lines the Zn(2+) pocket. Asp-69 is a catalytic residue. A Zn(2+)-binding site is contributed by Asp-91. Glu-118 serves as the catalytic Proton acceptor. Glu-119, Glu-140, and His-298 together coordinate Zn(2+).

Belongs to the peptidase M20A family. LysK subfamily. Zn(2+) is required as a cofactor. Co(2+) serves as cofactor.

The protein resides in the cytoplasm. It carries out the reaction [amino-group carrier protein]-C-terminal-gamma-(L-lysyl)-L-glutamate + H2O = [amino-group carrier protein]-C-terminal-L-glutamate + L-lysine. The catalysed reaction is [amino-group carrier protein]-C-terminal-gamma-(L-ornithyl)-L-glutamate + H2O = [amino-group carrier protein]-C-terminal-L-glutamate + L-ornithine. The protein operates within amino-acid biosynthesis; L-lysine biosynthesis via AAA pathway; L-lysine from L-alpha-aminoadipate (Thermus route): step 5/5. It participates in amino-acid biosynthesis; L-arginine biosynthesis. In terms of biological role, catalyzes the release of L-lysine from [LysW]-gamma-L-lysine and the release of L-ornithine from [LysW]-L-ornithine. The chain is Putative [LysW]-lysine/[LysW]-ornithine hydrolase from Pyrococcus abyssi (strain GE5 / Orsay).